The primary structure comprises 359 residues: Medium-wave-sensitive opsin 1 (359 aa).

Residues 1-47 are Extracellular-facing; it reads MAQQLTGEQTLDHYEDSTQASIFTYTNSNSTRGPFEGPNYHIAPRWV. Residues 12 to 38 are required for 11-cis-retinal regeneration; that stretch reads DHYEDSTQASIFTYTNSNSTRGPFEGP. The N-linked (GlcNAc...) asparagine glycan is linked to Asn-29. The chain crosses the membrane as a helical span at residues 48–72; it reads YHLTSTWMILVVIASVFTNGLVLAA. Residues 73–84 lie on the Cytoplasmic side of the membrane; the sequence is TMRFKKLRHPLN. Residues 85–110 traverse the membrane as a helical segment; the sequence is WILVNLAVADLAETIIASTISVVNQI. Topologically, residues 111-124 are extracellular; the sequence is YGYFVLGHPLCVIE. An intrachain disulfide couples Cys-121 to Cys-198. The chain crosses the membrane as a helical span at residues 125 to 144; it reads GYIVSLCGITGLWSLAIISW. Topologically, residues 145–163 are cytoplasmic; it reads ERWLVVCKPFGNVRFDAKL. A helical membrane pass occupies residues 164–187; that stretch reads ATVGIVFSWVWAAVWTAPPIFGWS. Residues 188-213 lie on the Extracellular side of the membrane; that stretch reads RYWPYGLKTSCGPDVFSGTSYPGVQS. Residues 214-241 form a helical membrane-spanning segment; that stretch reads YMMVLMVTCCIFPLSIIVLCYLQVWLAI. Over 242–263 the chain is Cytoplasmic; the sequence is RAVAKQQKESESTQKAEKEVTR. The helical transmembrane segment at 264–287 threads the bilayer; that stretch reads MVVVMVFAYCLCWGPYTFFACFAT. Residues 288 to 295 are Extracellular-facing; the sequence is AHPGYAFH. Residues 296-320 form a helical membrane-spanning segment; sequence PLVASLPSYFAKSATIYNPIIYVFM. Lys-307 is modified (N6-(retinylidene)lysine). Over 321 to 359 the chain is Cytoplasmic; the sequence is NRQFRNCILQLFGKKVDDSSELSSTSKTEVSSVSSVSPA.

It belongs to the G-protein coupled receptor 1 family. Opsin subfamily. In terms of assembly, monomer. Homodimer. Homotetramer. O-glycosylated. Post-translationally, phosphorylated on some or all of the serine and threonine residues present in the C-terminal region. As to expression, expressed in cone photoreceptor cells.

It is found in the membrane. In terms of biological role, visual pigments are the light-absorbing molecules that mediate vision. They consist of an apoprotein, opsin, covalently linked to cis-retinal. May increase spectral sensitivity in dim light. In Rattus norvegicus (Rat), this protein is Medium-wave-sensitive opsin 1 (Opn1mw).